The sequence spans 211 residues: Large ribosomal subunit protein bL25 (211 aa).

The protein belongs to the bacterial ribosomal protein bL25 family. CTC subfamily. In terms of assembly, part of the 50S ribosomal subunit; part of the 5S rRNA/L5/L18/L25 subcomplex. Contacts the 5S rRNA. Binds to the 5S rRNA independently of L5 and L18.

In terms of biological role, this is one of the proteins that binds to the 5S RNA in the ribosome where it forms part of the central protuberance. The sequence is that of Large ribosomal subunit protein bL25 from Methylobacterium nodulans (strain LMG 21967 / CNCM I-2342 / ORS 2060).